Reading from the N-terminus, the 443-residue chain is MSIESIKAREILDSRGNPTLEVEVWTSEGMFSAKVPSGASTGIHEAFELRDGDKSRYFGYGVLNAIVNVNNLISPTLKGMRVDNQKAIDDKMIELDGTKNKSKLGSNAIVGVSMAVARAAASIKGVPLYRYISQLAGNSNIRLPVPCFNVINGGKHAGNRLPFQEFMLVPIGAPKFKEALRYGSEVYHSLKEIIKERYGLDATNVGDEGGFAPNLTSPEEALTLLVDAINHSGYQDVIKIGIDSAASEFWNPKTSKYDMDFKNIGSSHLKSSLNSGEQLMSRYLEILKKYPIAFFEDPFGEDDWENHGKITAAIGNKIQIIGDDLLCTNPERIKKAISEKTVNSLLLKINQIGTLTETIEAAKLAKEAGWGCLVSHRSGETDDHFIADLVVGLGTGEIKSGAPCRFERLSKYNRLMKIEEELEKLHRSNGNSFEYAGEEFYHF.

Substrate-binding residues include H156 and E165. The Proton donor role is filled by E208. 3 residues coordinate Mg(2+): D243, E296, and D323. Positions 296 and 323 each coordinate substrate. K348 functions as the Proton acceptor in the catalytic mechanism. Substrate is bound by residues 375 to 378 (SHRS) and K399.

It belongs to the enolase family. Homodimer. Mg(2+) serves as cofactor.

The protein localises to the cytoplasm. The enzyme catalyses (2R)-2-phosphoglycerate = phosphoenolpyruvate + H2O. The protein operates within carbohydrate degradation; glycolysis; pyruvate from D-glyceraldehyde 3-phosphate: step 4/5. The protein is Enolase B (enoB) of Dictyostelium discoideum (Social amoeba).